The sequence spans 83 residues: Translation initiation factor IF-1 (83 aa).

One can recognise an S1-like domain in the interval 1 to 72 (MAKEESIEMQ…TRGRIVYREA (72 aa)).

This sequence belongs to the IF-1 family. As to quaternary structure, component of the 30S ribosomal translation pre-initiation complex which assembles on the 30S ribosome in the order IF-2 and IF-3, IF-1 and N-formylmethionyl-tRNA(fMet); mRNA recruitment can occur at any time during PIC assembly.

It localises to the cytoplasm. One of the essential components for the initiation of protein synthesis. Stabilizes the binding of IF-2 and IF-3 on the 30S subunit to which N-formylmethionyl-tRNA(fMet) subsequently binds. Helps modulate mRNA selection, yielding the 30S pre-initiation complex (PIC). Upon addition of the 50S ribosomal subunit IF-1, IF-2 and IF-3 are released leaving the mature 70S translation initiation complex. This is Translation initiation factor IF-1 from Coxiella burnetii (strain Dugway 5J108-111).